Consider the following 556-residue polypeptide: Cytochrome P450 monooxygenase polC (556 aa).

Residues 17–37 (LCFAISLLCAVAIATFLHKLY) traverse the membrane as a helical segment. Cys-479 provides a ligand contact to heme.

The protein belongs to the cytochrome P450 family. The cofactor is heme.

The protein resides in the membrane. The enzyme catalyses motiol + 3 reduced [NADPH--hemoprotein reductase] + 3 O2 = 4beta-carboxyl motiol + 3 oxidized [NADPH--hemoprotein reductase] + 4 H2O + 4 H(+). Its pathway is secondary metabolite biosynthesis; terpenoid biosynthesis. Functionally, cytochrome P450 monooxygenase; part of the gene cluster that mediates the biosynthesis of antifungal fernane-type triterpenoid polytolypin. PolC uses motiol as a substrate and converts the methyl group at position C-4 to a carboxyl group. Within the pathway, the triterpene cyclase polA first catalyzes the cyclization of 2,3-oxidosqualene to motiol, polC converts the 4-alpha-methyl group of motiol to a carboxyl group, polB is responsible for appending a hydroxyl group at the 2-alpha position and polE is a dual functional P450, which can catalyze the formation of both the 1-beta-hydroxyl group and 10-beta-carboxyl group. This is Cytochrome P450 monooxygenase polC from Polytolypa hystricis (strain UAMH7299).